Reading from the N-terminus, the 236-residue chain is Phosphoribosylaminoimidazole-succinocarboxamide synthase (236 aa).

It belongs to the SAICAR synthetase family.

The enzyme catalyses 5-amino-1-(5-phospho-D-ribosyl)imidazole-4-carboxylate + L-aspartate + ATP = (2S)-2-[5-amino-1-(5-phospho-beta-D-ribosyl)imidazole-4-carboxamido]succinate + ADP + phosphate + 2 H(+). The protein operates within purine metabolism; IMP biosynthesis via de novo pathway; 5-amino-1-(5-phospho-D-ribosyl)imidazole-4-carboxamide from 5-amino-1-(5-phospho-D-ribosyl)imidazole-4-carboxylate: step 1/2. In Pseudomonas putida (strain GB-1), this protein is Phosphoribosylaminoimidazole-succinocarboxamide synthase.